A 214-amino-acid polypeptide reads, in one-letter code: Urease accessory protein UreG (214 aa).

23–30 (GPVGSGKT) is a GTP binding site.

It belongs to the SIMIBI class G3E GTPase family. UreG subfamily. In terms of assembly, homodimer. UreD, UreF and UreG form a complex that acts as a GTP-hydrolysis-dependent molecular chaperone, activating the urease apoprotein by helping to assemble the nickel containing metallocenter of UreC. The UreE protein probably delivers the nickel.

The protein localises to the cytoplasm. Functionally, facilitates the functional incorporation of the urease nickel metallocenter. This process requires GTP hydrolysis, probably effectuated by UreG. This chain is Urease accessory protein UreG, found in Bordetella bronchiseptica (strain ATCC BAA-588 / NCTC 13252 / RB50) (Alcaligenes bronchisepticus).